Here is a 158-residue protein sequence, read N- to C-terminus: Transcription elongation factor GreB (158 aa).

This sequence belongs to the GreA/GreB family. GreB subfamily.

Functionally, necessary for efficient RNA polymerase transcription elongation past template-encoded arresting sites. The arresting sites in DNA have the property of trapping a certain fraction of elongating RNA polymerases that pass through, resulting in locked ternary complexes. Cleavage of the nascent transcript by cleavage factors such as GreA or GreB allows the resumption of elongation from the new 3'terminus. GreB releases sequences of up to 9 nucleotides in length. In Escherichia coli (strain K12), this protein is Transcription elongation factor GreB.